The chain runs to 287 residues: Glutamate racemase (287 aa).

Residues 1–15 are compositionally biased toward polar residues; sequence MATKPQDANTTSREA. The tract at residues 1-25 is disordered; the sequence is MATKPQDANTTSREAITSKADSPPR. Substrate-binding positions include 32–33 and 64–65; these read DS and YG. Cys96 functions as the Proton donor/acceptor in the catalytic mechanism. 97–98 contributes to the substrate binding site; it reads NT. Cys208 serves as the catalytic Proton donor/acceptor. 209–210 serves as a coordination point for substrate; sequence TH.

The protein belongs to the aspartate/glutamate racemases family.

It catalyses the reaction L-glutamate = D-glutamate. It functions in the pathway cell wall biogenesis; peptidoglycan biosynthesis. In terms of biological role, provides the (R)-glutamate required for cell wall biosynthesis. The polypeptide is Glutamate racemase (Yersinia pseudotuberculosis serotype I (strain IP32953)).